A 149-amino-acid chain; its full sequence is Calmodulin (149 aa).

At alanine 2 the chain carries N-acetylalanine. EF-hand domains follow at residues 8-43, 44-79, 81-116, and 117-149; these read EQIA…LGQN, PTEA…KMKD, DSEE…LGEK, and LTDE…MTAK. Residues aspartate 21, aspartate 23, aspartate 25, threonine 27, glutamate 32, aspartate 57, aspartate 59, asparagine 61, threonine 63, glutamate 68, aspartate 94, aspartate 96, asparagine 98, tyrosine 100, and glutamate 105 each contribute to the Ca(2+) site. The residue at position 116 (lysine 116) is an N6,N6,N6-trimethyllysine. Ca(2+) contacts are provided by aspartate 130, aspartate 132, aspartate 134, glutamine 136, and glutamate 141.

The protein belongs to the calmodulin family.

Functionally, calmodulin acts as part of a calcium signal transduction pathway by mediating the control of a large number of enzymes, ion channels, aquaporins and other proteins through calcium-binding. Calcium-binding is required for the activation of calmodulin. Among the enzymes to be stimulated by the calmodulin-calcium complex are a number of protein kinases, such as myosin light-chain kinases and calmodulin-dependent protein kinase type II (CaMK2), and phosphatases. The chain is Calmodulin (calm) from Electrophorus electricus (Electric eel).